Here is a 108-residue protein sequence, read N- to C-terminus: Integration host factor subunit alpha (108 aa).

It belongs to the bacterial histone-like protein family. Heterodimer of an alpha and a beta chain.

In terms of biological role, this protein is one of the two subunits of integration host factor, a specific DNA-binding protein that functions in genetic recombination as well as in transcriptional and translational control. In Bartonella henselae (strain ATCC 49882 / DSM 28221 / CCUG 30454 / Houston 1) (Rochalimaea henselae), this protein is Integration host factor subunit alpha.